The primary structure comprises 734 residues: DNA ligase (734 aa).

Residues 42–46 (DAEYD), 91–92 (SL), and Glu-125 contribute to the NAD(+) site. The active-site N6-AMP-lysine intermediate is the Lys-127. NAD(+)-binding residues include Arg-148, Glu-185, Lys-301, and Lys-325. Positions 430, 433, 454, and 460 each coordinate Zn(2+). The BRCT domain occupies 655 to 734 (SADSEVAGKT…DTWLQRVGKA (80 aa)).

This sequence belongs to the NAD-dependent DNA ligase family. LigA subfamily. Requires Mg(2+) as cofactor. Mn(2+) is required as a cofactor.

The enzyme catalyses NAD(+) + (deoxyribonucleotide)n-3'-hydroxyl + 5'-phospho-(deoxyribonucleotide)m = (deoxyribonucleotide)n+m + AMP + beta-nicotinamide D-nucleotide.. Its function is as follows. DNA ligase that catalyzes the formation of phosphodiester linkages between 5'-phosphoryl and 3'-hydroxyl groups in double-stranded DNA using NAD as a coenzyme and as the energy source for the reaction. It is essential for DNA replication and repair of damaged DNA. The polypeptide is DNA ligase (Mesorhizobium japonicum (strain LMG 29417 / CECT 9101 / MAFF 303099) (Mesorhizobium loti (strain MAFF 303099))).